We begin with the raw amino-acid sequence, 305 residues long: uncharacterized protein (305 aa).

The ABC transporter domain occupies 5–233; that stretch reads LELKNVTKNI…ENDTYFFQVE (229 aa). 37 to 44 lines the ATP pocket; that stretch reads GPNGAGKT.

It belongs to the ABC transporter superfamily.

This is an uncharacterized protein from Bacillus subtilis (strain 168).